Consider the following 447-residue polypeptide: Tektin-4 (447 aa).

Coiled-coil stretches lie at residues 114–143 (KSEL…RALD), 324–348 (KILS…DKEA), and 375–423 (FRLM…TNSL).

The protein belongs to the tektin family. In terms of assembly, microtubule inner protein component of sperm flagellar doublet microtubules. In terms of processing, ubiquitinated, leading to its degradation. Deubiquitinated by USP16, promoting its stability.

Its subcellular location is the cytoplasm. It localises to the cytoskeleton. It is found in the cilium axoneme. The protein resides in the flagellum axoneme. In terms of biological role, microtubule inner protein (MIP) part of the dynein-decorated doublet microtubules (DMTs) in cilia and flagellar axoneme. Forms filamentous polymers in the walls of ciliary and flagellar microtubules. Contributes to normal sperm motility. This Rattus norvegicus (Rat) protein is Tektin-4 (Tekt4).